The following is a 147-amino-acid chain: Large ribosomal subunit protein uL11 (147 aa).

It belongs to the universal ribosomal protein uL11 family. Part of the ribosomal stalk of the 50S ribosomal subunit. Interacts with L10 and the large rRNA to form the base of the stalk. L10 forms an elongated spine to which L12 dimers bind in a sequential fashion forming a multimeric L10(L12)X complex. In terms of processing, one or more lysine residues are methylated.

In terms of biological role, forms part of the ribosomal stalk which helps the ribosome interact with GTP-bound translation factors. This chain is Large ribosomal subunit protein uL11, found in Parabacteroides distasonis (strain ATCC 8503 / DSM 20701 / CIP 104284 / JCM 5825 / NCTC 11152).